A 132-amino-acid chain; its full sequence is Small ribosomal subunit protein uS8 (132 aa).

Belongs to the universal ribosomal protein uS8 family. In terms of assembly, part of the 30S ribosomal subunit. Contacts proteins S5 and S12.

Functionally, one of the primary rRNA binding proteins, it binds directly to 16S rRNA central domain where it helps coordinate assembly of the platform of the 30S subunit. The protein is Small ribosomal subunit protein uS8 of Bifidobacterium adolescentis (strain ATCC 15703 / DSM 20083 / NCTC 11814 / E194a).